Here is a 453-residue protein sequence, read N- to C-terminus: MGGLKFHVLMYPWFATGHMTPFLFLANKLAEKGHTVTFLLPKKSLKQLEHFNLFPHNIVFRSVTVPHVDGLPVGTETASEIPVTSTDLLMSAMDLTRDQVEAVVRAVEPDLIFFDFAHWIPEVARDFGLKTVKYVVVSASTIASMLVPGGELGVPPPGYPSSKVLLRKQDAYTMKKLEPTNTIDVGPNLLERVTTSLMNSDVIAIRTAREIEGNFCDYIEKHCRKKVLLTGPVFPEPDKTRELEERWVKWLSGYEPDSVVFCALGSQVILEKDQFQELCLGMELTGSPFLVAVKPPRGSSTIQEALPEGFEERVKGRGLVWGGWVQQPLILSHPSVGCFVSHCGFGSMWESLLSDCQIVLVPQLGDQVLNTRLLSDELKVSVEVAREETGWFSKESLCDAVNSVMKRDSELGNLVRKNHTKWRETVASPGLMTGYVDAFVESLQDLVSGTTHD.

Residues Ser-266, 325–327, 342–350, and 364–367 contribute to the UDP-alpha-D-glucose site; these read VQQ, HCGFGSMWE, and LGDQ.

Belongs to the UDP-glycosyltransferase family.

This chain is UDP-glycosyltransferase 79B3 (UGT79B3), found in Arabidopsis thaliana (Mouse-ear cress).